The primary structure comprises 505 residues: Chromatin assembly factor 1 subunit FAS2 homolog (505 aa).

7 WD repeats span residues 11–50 (HEQQPVLTLDFHPVSRRLATGGSDHDIKIWVIASDDSDKK), 62–101 (SHSSAVNVLRFSPSGENLASGADGGGIIIWKLHSTDDGEA), 110–149 (FHHKDVLDLQWSQDGAFLVSASVDNSCIVWDAIKGSVQQK), 152–191 (GHLHYVQGVAWDPLGQYIASLSSDRTCRIYANKPQGKSKN), 223–268 (FHDE…SRRD), 278–333 (GASK…PILI), and 337–378 (LHYA…LPYN). The disordered stretch occupies residues 479–505 (VTAPPVSTKNSASSKPTKKRITPIAIN).

This sequence belongs to the WD repeat HIR1 family. As to quaternary structure, component of the chromatin assembly factor 1 (CAF-1) complex, composed of FSM (FAS1), FAS2 and MSI1.

The protein localises to the nucleus. In terms of biological role, component of the chromatin assembly factor complex (CAF-1) involved in chromatin assembly following DNA replication and DNA repair. Required for several aspects of development, including apical meristem maintenance by regulating the durations of the S- and G2-phases of the cell cycle through its chromatin assembly activity. The chain is Chromatin assembly factor 1 subunit FAS2 homolog (FAS2) from Oryza sativa subsp. japonica (Rice).